Reading from the N-terminus, the 311-residue chain is Salutaridine reductase (311 aa).

Residues N21–I24, R44, D70–V71, and N98 contribute to the NADP(+) site. Substrate is bound by residues Y129 and S180. NADP(+) contacts are provided by residues Y236, K240, and V267 to N272. Residue Y236 is the Proton acceptor of the active site. C263 and C305 are disulfide-bonded.

Belongs to the short-chain dehydrogenases/reductases (SDR) family.

The catalysed reaction is (7S)-salutaridinol + NADP(+) = salutaridine + NADPH + H(+). Its pathway is alkaloid biosynthesis; morphine biosynthesis. Its activity is regulated as follows. Strong substrate inhibition. Was thought to be due to mutually exclusive productive and non-productive modes of substrate binding in the active site. Alternatively, SALR may undergo significant conformational changes during catalytic turnover. Its function is as follows. Short-chain dehydrogenases/reductases involved in biosynthesis of morphinan-type benzylisoquinoline and opiate alkaloids natural products. Catalyzes specifically the stereospecific conversion of salutaridine to salutaridinol. In Papaver somniferum (Opium poppy), this protein is Salutaridine reductase.